A 371-amino-acid polypeptide reads, in one-letter code: Germination protease (371 aa).

Positions 1 to 16 are excised as a propeptide; it reads MEKQKLDLSAYQIRTD.

Belongs to the peptidase A25 family. In terms of assembly, homotetramer. Autoproteolytically processed. The inactive tetrameric zymogen termed p46 autoprocesses to a smaller form termed p41, which is active only during spore germination.

The catalysed reaction is Endopeptidase action with P4 Glu or Asp, P1 preferably Glu &gt; Asp, P1' hydrophobic and P2' Ala.. Its function is as follows. Initiates the rapid degradation of small, acid-soluble proteins during spore germination. The protein is Germination protease of Bacillus pumilus (strain SAFR-032).